The chain runs to 273 residues: MPGDHRRIRGPEESQPPQLYAAEDDETPAARDPTRLRPVYARAGLLSQAKGSAYLEAGGTKVLCAVSGPRQAEGGERGSGPAGAGGEAPAALRGRLLCDFRRAPFSGRRRRAPQGGGGEDRELGLALQEALEPAVRLGRYPRAQLEVSALLLEDGGCALAAALTAAALALADAGVEMYDLVVGCGLSLTPGPSPTWLLDPTRLEEEHSAAGLTVALMPVLNQVAGLLGSGEGGQTESWTDAVRLGLEGCQRLYPVLQQCLVRAARRRGAAAPP.

The tract at residues 1-36 is disordered; sequence MPGDHRRIRGPEESQPPQLYAAEDDETPAARDPTRL.

Belongs to the RNase PH family. Component of the RNA exosome core complex (Exo-9), composed of EXOSC1, EXOSC2, EXOSC3, EXOSC4, EXOSC5, EXOSC6, EXOSC7, EXOSC8 and EXOSC9; within the complex interacts with EXOSC1, EXOSC7 and EXOSC8. The catalytically inactive RNA exosome core complex (Exo-9) associates with the catalytic subunit EXOSC10/RRP6. Exo-9 may associate with DIS3 to form the nucleolar exosome complex, or DIS3L to form the cytoplasmic exosome complex. Exo-9 is formed by a hexameric base ring consisting of the heterodimers EXOSC4-EXOSC9, EXOSC5-EXOSC8 and EXOSC6-EXOSC7, and a cap ring consisting of EXOSC1, EXOSC2 and EXOSC3. The RNA exosome complex associates with cofactors EXOSC10/RRP6, C1D/RRP47, MPHOSPH6/MPP6 and MTREX/MTR4.

The protein resides in the cytoplasm. Its subcellular location is the nucleus. It localises to the nucleolus. Functionally, non-catalytic component of the RNA exosome complex which has 3'-&gt;5' exoribonuclease activity and participates in a multitude of cellular RNA processing and degradation events. In the nucleus, the RNA exosome complex is involved in proper maturation of stable RNA species such as rRNA, snRNA and snoRNA, in the elimination of RNA processing by-products and non-coding 'pervasive' transcripts, such as antisense RNA species and promoter-upstream transcripts (PROMPTs), and of mRNAs with processing defects, thereby limiting or excluding their export to the cytoplasm. The RNA exosome may be involved in Ig class switch recombination (CSR) and/or Ig variable region somatic hypermutation (SHM) by targeting AICDA deamination activity to transcribed dsDNA substrates. In the cytoplasm, the RNA exosome complex is involved in general mRNA turnover and specifically degrades inherently unstable mRNAs containing AU-rich elements (AREs) within their 3' untranslated regions, and in RNA surveillance pathways, preventing translation of aberrant mRNAs. It seems to be involved in degradation of histone mRNA. The catalytic inactive RNA exosome core complex of 9 subunits (Exo-9) is proposed to play a pivotal role in the binding and presentation of RNA for ribonucleolysis, and to serve as a scaffold for the association with catalytic subunits and accessory proteins or complexes. The polypeptide is Exosome complex component MTR3 (Exosc6) (Mus musculus (Mouse)).